Consider the following 65-residue polypeptide: Large ribosomal subunit protein uL29 (65 aa).

The protein belongs to the universal ribosomal protein uL29 family.

The chain is Large ribosomal subunit protein uL29 from Buchnera aphidicola subsp. Schizaphis graminum (strain Sg).